The sequence spans 444 residues: Structure-specific endonuclease subunit SLX1 (444 aa).

One can recognise a GIY-YIG domain in the interval 23–105 (AFSCCYLLRS…QNTKVSRHAD (83 aa)). The segment at 240–295 (CGVCKQRLILQHDIIAVCSHSSCHCAAHLSCLSSHFLKDKDSDSELVPREGTCPTC) adopts an SLX1-type zinc-finger fold. Residues 324-354 (RRQRAGTPKGQGLKSVRGRGHSEDENESDAL) are disordered.

It belongs to the SLX1 family. In terms of assembly, forms a heterodimer with SLX4. A divalent metal cation serves as cofactor.

Its subcellular location is the nucleus. Catalytic subunit of the SLX1-SLX4 structure-specific endonuclease that resolves DNA secondary structures generated during DNA repair and recombination. Has endonuclease activity towards branched DNA substrates, introducing single-strand cuts in duplex DNA close to junctions with ss-DNA. The sequence is that of Structure-specific endonuclease subunit SLX1 from Paracoccidioides lutzii (strain ATCC MYA-826 / Pb01) (Paracoccidioides brasiliensis).